We begin with the raw amino-acid sequence, 334 residues long: Thioredoxin reductase (334 aa).

Residues 10 to 13, 39 to 40, Gln44, Asn53, Val86, Cys143, Asp287, and 294 to 296 each bind FAD; these read SGPA, IA, and RQA. A disulfide bond links Cys140 and Cys143.

The protein belongs to the class-II pyridine nucleotide-disulfide oxidoreductase family. Homodimer. Requires FAD as cofactor.

Its subcellular location is the cytoplasm. The catalysed reaction is [thioredoxin]-dithiol + NADP(+) = [thioredoxin]-disulfide + NADPH + H(+). In Neurospora crassa (strain ATCC 24698 / 74-OR23-1A / CBS 708.71 / DSM 1257 / FGSC 987), this protein is Thioredoxin reductase (cys-9).